The following is a 271-amino-acid chain: Thiazole synthase (271 aa).

Lys95 acts as the Schiff-base intermediate with DXP in catalysis. Residues Gly156, 182-183, and 204-205 contribute to the 1-deoxy-D-xylulose 5-phosphate site; these read AG and NT.

This sequence belongs to the ThiG family. As to quaternary structure, homotetramer. Forms heterodimers with either ThiH or ThiS.

The protein resides in the cytoplasm. It catalyses the reaction [ThiS sulfur-carrier protein]-C-terminal-Gly-aminoethanethioate + 2-iminoacetate + 1-deoxy-D-xylulose 5-phosphate = [ThiS sulfur-carrier protein]-C-terminal Gly-Gly + 2-[(2R,5Z)-2-carboxy-4-methylthiazol-5(2H)-ylidene]ethyl phosphate + 2 H2O + H(+). It participates in cofactor biosynthesis; thiamine diphosphate biosynthesis. Catalyzes the rearrangement of 1-deoxy-D-xylulose 5-phosphate (DXP) to produce the thiazole phosphate moiety of thiamine. Sulfur is provided by the thiocarboxylate moiety of the carrier protein ThiS. In vitro, sulfur can be provided by H(2)S. This chain is Thiazole synthase, found in Yersinia pestis.